Here is a 303-residue protein sequence, read N- to C-terminus: UDP-3-O-acyl-N-acetylglucosamine deacetylase (303 aa).

The Zn(2+) site is built by H78, H237, and D241. H264 functions as the Proton donor in the catalytic mechanism.

It belongs to the LpxC family. It depends on Zn(2+) as a cofactor.

It catalyses the reaction a UDP-3-O-[(3R)-3-hydroxyacyl]-N-acetyl-alpha-D-glucosamine + H2O = a UDP-3-O-[(3R)-3-hydroxyacyl]-alpha-D-glucosamine + acetate. It functions in the pathway glycolipid biosynthesis; lipid IV(A) biosynthesis; lipid IV(A) from (3R)-3-hydroxytetradecanoyl-[acyl-carrier-protein] and UDP-N-acetyl-alpha-D-glucosamine: step 2/6. Functionally, catalyzes the hydrolysis of UDP-3-O-myristoyl-N-acetylglucosamine to form UDP-3-O-myristoylglucosamine and acetate, the committed step in lipid A biosynthesis. This is UDP-3-O-acyl-N-acetylglucosamine deacetylase from Pseudomonas aeruginosa (strain LESB58).